Here is a 322-residue protein sequence, read N- to C-terminus: TATA box-binding protein-like 2 (322 aa).

The tract at residues 31-54 is disordered; the sequence is PALSSTQDSTYLSGRAGPSRESGA. A compositionally biased stretch (polar residues) spans 32–42; that stretch reads ALSSTQDSTYL.

The protein belongs to the TBP family.

The protein resides in the nucleus. Functionally, TATA box-binding transcription factor. Members of the TBP family are differentially required to regulate transcription and development during early embryogenesis. The sequence is that of TATA box-binding protein-like 2 from Takifugu rubripes (Japanese pufferfish).